We begin with the raw amino-acid sequence, 784 residues long: Protein DBF4 homolog B (784 aa).

Residues 27 to 117 (CREITFAGKS…SRGKQLLKKV (91 aa)) enclose the BRCT domain. A disordered region spans residues 222-243 (TVKKKDPGDQEEEEGQRSQKPQ). A DBF4-type zinc finger spans residues 244–293 (ARKRKGYCECCEETFDTLSEHLVGEHHFRFVSNPLSYKMIDDLAAQLTCD). Zn(2+)-binding residues include Cys251, Cys254, His264, and His270. Disordered regions lie at residues 299-332 (FGSPTSPEAERSSQNEDWDLDLAPGEAEPAGNEG), 348-368 (HADCEDQGAPAYLRDGGAEEP), and 495-529 (TVGSQGDVTSHSAANKPHTENCPVDSTGDRHAQPA). Over residues 498–507 (SQGDVTSHSA) the composition is skewed to polar residues.

Forms a complex with cdc7. Post-translationally, phosphorylated. Stably phosphorylated throughout the cell cycle.

It localises to the nucleus. Regulatory subunit for cdc7 which activates its kinase activity thereby playing a central role in DNA replication and cell proliferation. Specifically required during the initiation of DNA replication in egg and during early embryonic development. The complex cdc7-dbf4b phosphorylates mcm2 and mcm4 subunits and is required for cdc45 loading. The sequence is that of Protein DBF4 homolog B (dbf4b) from Xenopus laevis (African clawed frog).